A 202-amino-acid chain; its full sequence is Biogenesis of lysosome-related organelles complex 1 subunit 3 (202 aa).

Residues 1-11 (MASQGRRRRPL) show a composition bias toward basic residues. The interval 1 to 82 (MASQGRRRRP…PTAAPRDLPP (82 aa)) is disordered. The span at 41–55 (LGPSGPTRGRPTGLR) shows a compositional bias: low complexity. A compositionally biased stretch (acidic residues) spans 61–71 (AETDSEPEPEP). Threonine 63 is modified (phosphothreonine). Serine 65 carries the phosphoserine modification.

Belongs to the BLOC1S3 family. Interacts with BLOC1S4, BLOC1S5 and BLOC1S6. Component of the biogenesis of lysosome-related organelles complex 1 (BLOC-1) composed of BLOC1S1, BLOC1S2, BLOC1S3, BLOC1S4, BLOC1S5, BLOC1S6, DTNBP1/BLOC1S7 and SNAPIN/BLOC1S8. Octamer composed of one copy each BLOC1S1, BLOC1S2, BLOC1S3, BLOC1S4, BLOC1S5, BLOC1S6, DTNBP1/BLOC1S7 and SNAPIN/BLOC1S8. The BLOC-1 complex associates with the AP-3 protein complex and membrane protein cargos. Interacts directly with BLOC1S2.

The protein resides in the cytoplasm. Functionally, component of the BLOC-1 complex, a complex that is required for normal biogenesis of lysosome-related organelles (LRO), such as platelet dense granules and melanosomes. In concert with the AP-3 complex, the BLOC-1 complex is required to target membrane protein cargos into vesicles assembled at cell bodies for delivery into neurites and nerve terminals. The BLOC-1 complex, in association with SNARE proteins, is also proposed to be involved in neurite extension. Plays a role in intracellular vesicle trafficking. This is Biogenesis of lysosome-related organelles complex 1 subunit 3 (BLOC1S3) from Homo sapiens (Human).